The chain runs to 459 residues: SLIT-ROBO Rho GTPase-activating protein 2C (459 aa).

One can recognise an F-BAR domain in the interval 22-325 (KEIRAQLTEQ…AVENLDATSD (304 aa)). Basic and acidic residues predominate over residues 181–202 (LKEAEKQEEKQIGKSVKQEDRQ). The interval 181-211 (LKEAEKQEEKQIGKSVKQEDRQTPCSPDSTA) is disordered. Residues 363–401 (QSELVQRCQQLQSRLSTLKIENEEVKKTMEATLQTIQDI) are a coiled coil.

As to quaternary structure, homodimer. Interacts (via F-BAR domain) with SRGAP2/SRGAP2A (via F-BAR domain); formation of the heterodimer inhibits SRGAP2/SRGAP2A function. Ubiquitously expressed with higher expression in cerebellum. Probably expressed in fetal and adult neurons (at protein level).

Human-specific protein that acts as a key modifier of cortical connectivity in the human brain. Acts by inhibiting the functions of ancestral paralog SRGAP2/SRGAP2A, a postsynaptic protein that regulates excitatory and inhibitory synapse maturation and density in cortical pyramidal neurons. SRGAP2C is unstable but is able to heterodimerize with SRGAP2/SRGAP2A, thereby reducing SRGAP2/SRGAP2A levels through proteasome-dependent degradation. Inhibition of SRGAP2/SRGAP2A by SRGAP2C leads to an increase in synaptic density and protracted synaptic maturation of both excitatory and inhibitory synapses. Modifies cortical circuit connectivity by increasing the number of local and long-range cortical inputs received by layer 2/3 pyramidal neurons. Also able to increase the probability of sensory-evoked responses by layer 2/3 pyramidal neurons. In Homo sapiens (Human), this protein is SLIT-ROBO Rho GTPase-activating protein 2C.